The primary structure comprises 321 residues: Thioredoxin reductase (321 aa).

36–43 (TGMEKGGQ) contributes to the FAD binding site. Cysteines 136 and 139 form a disulfide. 287-296 (DVMDHIYRQA) contacts FAD.

Belongs to the class-II pyridine nucleotide-disulfide oxidoreductase family. As to quaternary structure, homodimer. Requires FAD as cofactor.

Its subcellular location is the cytoplasm. It carries out the reaction [thioredoxin]-dithiol + NADP(+) = [thioredoxin]-disulfide + NADPH + H(+). The polypeptide is Thioredoxin reductase (trxB) (Escherichia coli O157:H7).